Consider the following 75-residue polypeptide: Protein EGO2 (75 aa).

In Saccharomyces cerevisiae (strain ATCC 204508 / S288c) (Baker's yeast), this protein is Protein EGO2.